Here is a 66-residue protein sequence, read N- to C-terminus: ATP synthase F(0) complex subunit 8 (66 aa).

A helical membrane pass occupies residues 8 to 24 (TWLTMILSMFLTLFIIF). Lysine 54 carries the N6-acetyllysine; alternate modification. Lysine 54 is modified (N6-succinyllysine; alternate). Lysine 57 carries the post-translational modification N6-acetyllysine.

This sequence belongs to the ATPase protein 8 family. In terms of assembly, component of the ATP synthase complex composed at least of ATP5F1A/subunit alpha, ATP5F1B/subunit beta, ATP5MC1/subunit c (homooctomer), MT-ATP6/subunit a, MT-ATP8/subunit 8, ATP5ME/subunit e, ATP5MF/subunit f, ATP5MG/subunit g, ATP5MK/subunit k, ATP5MJ/subunit j, ATP5F1C/subunit gamma, ATP5F1D/subunit delta, ATP5F1E/subunit epsilon, ATP5PF/subunit F6, ATP5PB/subunit b, ATP5PD/subunit d, ATP5PO/subunit OSCP. ATP synthase complex consists of a soluble F(1) head domain (subunits alpha(3) and beta(3)) - the catalytic core - and a membrane F(0) domain - the membrane proton channel (subunits c, a, 8, e, f, g, k and j). These two domains are linked by a central stalk (subunits gamma, delta, and epsilon) rotating inside the F1 region and a stationary peripheral stalk (subunits F6, b, d, and OSCP). Interacts with PRICKLE3.

It localises to the mitochondrion membrane. In terms of biological role, subunit 8, of the mitochondrial membrane ATP synthase complex (F(1)F(0) ATP synthase or Complex V) that produces ATP from ADP in the presence of a proton gradient across the membrane which is generated by electron transport complexes of the respiratory chain. ATP synthase complex consist of a soluble F(1) head domain - the catalytic core - and a membrane F(1) domain - the membrane proton channel. These two domains are linked by a central stalk rotating inside the F(1) region and a stationary peripheral stalk. During catalysis, ATP synthesis in the catalytic domain of F(1) is coupled via a rotary mechanism of the central stalk subunits to proton translocation. In vivo, can only synthesize ATP although its ATP hydrolase activity can be activated artificially in vitro. Part of the complex F(0) domain. This Bos mutus grunniens (Wild yak) protein is ATP synthase F(0) complex subunit 8.